Reading from the N-terminus, the 294-residue chain is Histone deacetylase HDT3 (294 aa).

Met1 carries the post-translational modification N-acetylmethionine. A required to repress transcription region spans residues 2 to 5; that stretch reads EFWG. Residues 124-269 form a disordered region; sequence QVNFQLPNED…TPKSAGAFGC (146 aa). The segment covering 140–188 has biased composition (acidic residues); sequence DDADGSEEDSSDDDDSENSGDEEEEKVTAESDSEEDDSSDDEEDDSSEE. The span at 189–202 shows a compositional bias: basic and acidic residues; the sequence is ETPKKPEEPKKRSA. Residues 203–213 show a composition bias toward low complexity; that stretch reads EPNSSKNPASN. Positions 252 to 262 are enriched in polar residues; sequence GETSKQQQTPK. Residues 267–290 form a C2H2-type zinc finger; that stretch reads FGCKSCTRTFTSEMGLQSHTKAKH.

This sequence belongs to the histone deacetylase HD2 family. Interacts with DNMT2. As to expression, expressed in leaves, roots, stems, young plantlets, flowers and siliques. Highest levels in ovules, embryos, shoot apical meristems and first leaves. Also expressed in somatic embryos.

The protein localises to the nucleus. It is found in the nucleolus. Probably mediates the deacetylation of lysine residues on the N-terminal part of the core histones (H2A, H2B, H3 and H4). Histone deacetylation gives a tag for epigenetic repression and plays an important role in transcriptional regulation, cell cycle progression and developmental events. Involved in the modulation of abscisic acid and stress-responsive genes. In Arabidopsis thaliana (Mouse-ear cress), this protein is Histone deacetylase HDT3 (HDT3).